A 335-amino-acid chain; its full sequence is Ketol-acid reductoisomerase (NADP(+)) (335 aa).

Residues 1-182 enclose the KARI N-terminal Rossmann domain; that stretch reads MATIIYDDET…GATRAGVYET (182 aa). NADP(+)-binding positions include 25–28, R48, S51, S53, and 83–86; these read YGSQ and DEKQ. H108 is a catalytic residue. Residue G134 coordinates NADP(+). Positions 183-328 constitute a KARI C-terminal knotted domain; the sequence is TFREETETDL…KQIRANIPWL (146 aa). 4 residues coordinate Mg(2+): D191, E195, E227, and E231. S252 lines the substrate pocket.

It belongs to the ketol-acid reductoisomerase family. Mg(2+) serves as cofactor.

It catalyses the reaction (2R)-2,3-dihydroxy-3-methylbutanoate + NADP(+) = (2S)-2-acetolactate + NADPH + H(+). The enzyme catalyses (2R,3R)-2,3-dihydroxy-3-methylpentanoate + NADP(+) = (S)-2-ethyl-2-hydroxy-3-oxobutanoate + NADPH + H(+). It participates in amino-acid biosynthesis; L-isoleucine biosynthesis; L-isoleucine from 2-oxobutanoate: step 2/4. Its pathway is amino-acid biosynthesis; L-valine biosynthesis; L-valine from pyruvate: step 2/4. Its function is as follows. Involved in the biosynthesis of branched-chain amino acids (BCAA). Catalyzes an alkyl-migration followed by a ketol-acid reduction of (S)-2-acetolactate (S2AL) to yield (R)-2,3-dihydroxy-isovalerate. In the isomerase reaction, S2AL is rearranged via a Mg-dependent methyl migration to produce 3-hydroxy-3-methyl-2-ketobutyrate (HMKB). In the reductase reaction, this 2-ketoacid undergoes a metal-dependent reduction by NADPH to yield (R)-2,3-dihydroxy-isovalerate. The protein is Ketol-acid reductoisomerase (NADP(+)) of Methanosarcina mazei (strain ATCC BAA-159 / DSM 3647 / Goe1 / Go1 / JCM 11833 / OCM 88) (Methanosarcina frisia).